We begin with the raw amino-acid sequence, 224 residues long: UPF0758 protein Sde_3678 (224 aa).

One can recognise an MPN domain in the interval 102-224 (SLTSTTAVKQ…AVSFAERGWI (123 aa)). Residues H173, H175, and D186 each contribute to the Zn(2+) site. The JAMM motif motif lies at 173-186 (HNHPSGIAEPSEPD).

Belongs to the UPF0758 family.

In Saccharophagus degradans (strain 2-40 / ATCC 43961 / DSM 17024), this protein is UPF0758 protein Sde_3678.